The sequence spans 960 residues: Gamma-aminobutyric acid type B receptor subunit 1 (960 aa).

The first 19 residues, 1-19 (MLLLLLVPLFLRPLGAGGA), serve as a signal peptide directing secretion. Residues 20 to 590 (QTPNVTSEGC…KTFRFLSQKL (571 aa)) lie on the Extracellular side of the membrane. N23 and N83 each carry an N-linked (GlcNAc...) asparagine glycan. Sushi domains lie at 29 to 95 (CQII…PSRC) and 97 to 158 (RICS…HCQV). Disulfide bonds link C99/C144, C130/C156, and C219/C245. The 4-aminobutanoate site is built by S246, S269, H286, and Y366. C375 and C409 are joined by a disulfide. N408 and N439 each carry an N-linked (GlcNAc...) asparagine glycan. Residue E465 participates in 4-aminobutanoate binding. N-linked (GlcNAc...) asparagine glycosylation is found at N481, N501, and N513. Residues 591–611 (FISVSVLSSLGIVLAVVCLSF) traverse the membrane as a helical segment. Topologically, residues 612 to 630 (NIYNSHVRYIQNSQPNLNN) are cytoplasmic. A helical transmembrane segment spans residues 631–651 (LTAVGCSLALAAVFPLGLDGY). The Extracellular segment spans residues 652 to 666 (HIGRSQFPFVCQARL). A helical transmembrane segment spans residues 667 to 687 (WLLGLGFSLGYGSMFTKIWWV). Over 688–709 (HTVFTKKEEKKEWRKTLEPWKL) the chain is Cytoplasmic. The chain crosses the membrane as a helical span at residues 710–730 (YATVGLLVGMDILTLAIWQIV). The Extracellular segment spans residues 731–767 (DPLHRTIETFAKEEPKEDIDVSILPQLEHCSSKKMNT). The chain crosses the membrane as a helical span at residues 768–788 (WLGIFYGYKGLLLLLGIFLAY). The Cytoplasmic portion of the chain corresponds to 789–803 (ETKSVSTEKINDHRA). The chain crosses the membrane as a helical span at residues 804-824 (VGMAIYNVAVLCLITAPVTMI). Residues 825-832 (LSSQQDAA) are Extracellular-facing. Residues 833–853 (FAFASLAIVFSSYITLVVLFV) form a helical membrane-spanning segment. Residues 854 to 960 (PKMRRLITRG…DGSRVHLLYK (107 aa)) lie on the Cytoplasmic side of the membrane. Disordered regions lie at residues 866-891 (QSEA…RLLE) and 908-960 (VSEL…LLYK). The span at 867 to 879 (SEAQDTMKTGSST) shows a compositional bias: polar residues. Residues 868–924 (EAQDTMKTGSSTNNNEEEKSRLLEKENRELEKIIAEKEERVSELRHQLQSRQQIRSR) are a coiled coil. The residue at position 872 (T872) is a Phosphothreonine. The segment at 887–915 (SRLLEKENRELEKIIAEKEERVSELRHQL) is interaction with ATF4. T929 carries the post-translational modification Phosphothreonine.

It belongs to the G-protein coupled receptor 3 family. GABA-B receptor subfamily. Heterodimer of GABBR1 and GABBR2. Homodimers may form, but are inactive. Interacts (via C-terminus) with ATF4 (via leucine zipper domain). Interacts with JAKMIP1. Interacts with KCTD8, KCTD12, KCTD12B and KCTD16; this interaction determines the pharmacology and kinetics of the receptor response, the KCTD proteins markedly accelerating the GABA-B response, although to different extents. Expressed in neuronal tissue including cortex, cerebellum and spinal cord. Not detected in non-neuronal tissues including heart, liver, spleen and kidney.

The protein localises to the cell membrane. Its subcellular location is the postsynaptic cell membrane. The protein resides in the cell projection. It localises to the dendrite. In terms of biological role, component of a heterodimeric G-protein coupled receptor for GABA, formed by GABBR1 and GABBR2. Within the heterodimeric GABA receptor, only GABBR1 seems to bind agonists, while GABBR2 mediates coupling to G proteins. Ligand binding causes a conformation change that triggers signaling via guanine nucleotide-binding proteins (G proteins) and modulates the activity of down-stream effectors, such as adenylate cyclase. Signaling inhibits adenylate cyclase, stimulates phospholipase A2, activates potassium channels, inactivates voltage-dependent calcium-channels and modulates inositol phospholipid hydrolysis. Calcium is required for high affinity binding to GABA. Plays a critical role in the fine-tuning of inhibitory synaptic transmission. Pre-synaptic GABA receptor inhibits neurotransmitter release by down-regulating high-voltage activated calcium channels, whereas postsynaptic GABA receptor decreases neuronal excitability by activating a prominent inwardly rectifying potassium (Kir) conductance that underlies the late inhibitory postsynaptic potentials. Not only implicated in synaptic inhibition but also in hippocampal long-term potentiation, slow wave sleep, muscle relaxation and antinociception. This is Gamma-aminobutyric acid type B receptor subunit 1 (Gabbr1) from Mus musculus (Mouse).